The chain runs to 242 residues: Ubiquinone biosynthesis O-methyltransferase (242 aa).

S-adenosyl-L-methionine is bound by residues R44, G64, D85, and M129.

Belongs to the methyltransferase superfamily. UbiG/COQ3 family.

It carries out the reaction a 3-demethylubiquinol + S-adenosyl-L-methionine = a ubiquinol + S-adenosyl-L-homocysteine + H(+). The enzyme catalyses a 3-(all-trans-polyprenyl)benzene-1,2-diol + S-adenosyl-L-methionine = a 2-methoxy-6-(all-trans-polyprenyl)phenol + S-adenosyl-L-homocysteine + H(+). It functions in the pathway cofactor biosynthesis; ubiquinone biosynthesis. O-methyltransferase that catalyzes the 2 O-methylation steps in the ubiquinone biosynthetic pathway. The sequence is that of Ubiquinone biosynthesis O-methyltransferase from Salmonella paratyphi A (strain ATCC 9150 / SARB42).